The chain runs to 503 residues: Endoglycoceramidase (503 aa).

An N-terminal signal peptide occupies residues 1–21 (MAETQPLVFVLMSISAILTAG). N72, N108, and N205 each carry an N-linked (GlcNAc...) asparagine glycan. Residue E239 is the Proton donor of the active site. N-linked (GlcNAc...) asparagine glycans are attached at residues N307, N409, and N485.

The protein belongs to the glycosyl hydrolase 5 (cellulase A) family.

The protein localises to the secreted. It localises to the nematocyst. It catalyses the reaction an oligoglycosyl-(1-&gt;4)-beta-D-glucosyl-(1&lt;-&gt;1)-ceramide + H2O = an oligoglycosyl-(1-&gt;4)-D-glucose + an N-acyl-sphingoid base. Completely inhibited by Hg(2+). Cu(2+) and zinc have no effect on enzyme activity. Lithium, potassium, manganese, Ni(2+), calcium, magnesium and EDTA have no significant effect on enzyme activity. Enzyme requires presence of detergents such as Triton X-100 and Lubrol PX for the hydrolysis of glycosphingolipids. Taurodeoxycholate strongly inhibits the enzyme activity and SDS completely inhibits the enzyme activity. Functionally, hydrolysis of the glycosidic linkage between oligosaccharides and ceramides of glycosphingolipids, especially b-series polysialogangliosides. The polypeptide is Endoglycoceramidase (Cyanea nozakii (Jellyfish)).